A 644-amino-acid chain; its full sequence is MFQDNPLLAQLKQQLHSQTPRAEGVVKGTEKGFGFLEVDAQKSYFIPPPQMKKVMHGDRIVAVIHSEKDRESAEPETLVEPFLTRFVGKVQKKDDRLAIVPDHPLLKDAIPCRAARGVEHDFKQGDWAVAEMRRHPLKGDRGFYAELTQFITFSDDHFVPWWVTLARHNLEKEAPDGVATEMLDEGLTRRDLTALDFVTIDSASTEDMDDALYVESTADGKLLLTVAIADPTAWIAEGSKLDKAAKVRAFTNYLPGFNIPMLPRELSDDLCSLRANEVRPVLACQMTLAADGTIEDNIEFFAATIESKAKLAYDDVSDWLEGRGSWQPGSDAIAQQITLLKDVCQRRSEWRQTHALVFKDRPDYRFVLGEKGEVLDIVAEPRRIANRIVEESMIAANICAARVLRDKLGFGVYNVHTGFDPANTEQLAALLKTHDVHVDPTEVLTLEGFCKLRRELDAQPTGFLDSRIRRFQSFAEISTEPGPHFGLGLEAYATWTSPIRKYGDMINHRLLKAIIKGETIARPQDDATVQMAERRRLNRMAERDVADWLYARFLNDKAGTDTRFAAEILDISRGGMRVRLVDNGAVAFIPAPFLHAVRDELVCSQENGTVQIKGEVVYKVTDVIDVTIAEVRMETRSIIARPAV.

In terms of domain architecture, RNB spans 189 to 516; the sequence is RRDLTALDFV…NHRLLKAIIK (328 aa). The 83-residue stretch at 561-643 folds into the S1 motif domain; it reads DTRFAAEILD…ETRSIIARPA (83 aa).

The protein belongs to the RNR ribonuclease family. RNase II subfamily.

The protein localises to the cytoplasm. The catalysed reaction is Exonucleolytic cleavage in the 3'- to 5'-direction to yield nucleoside 5'-phosphates.. Functionally, involved in mRNA degradation. Hydrolyzes single-stranded polyribonucleotides processively in the 3' to 5' direction. The protein is Exoribonuclease 2 of Klebsiella pneumoniae (strain 342).